The chain runs to 551 residues: Hydroxymethylpyrimidine/phosphomethylpyrimidine kinase THI21 (551 aa).

A 4-amino-5-hydroxymethyl-2-methylpyrimidine-binding site is contributed by Gln64.

In the N-terminal section; belongs to the ThiD family. It in the C-terminal section; belongs to the thiaminase-2 family.

The catalysed reaction is 4-amino-5-hydroxymethyl-2-methylpyrimidine + ATP = 4-amino-2-methyl-5-(phosphooxymethyl)pyrimidine + ADP + H(+). It catalyses the reaction 4-amino-2-methyl-5-(phosphooxymethyl)pyrimidine + ATP = 4-amino-2-methyl-5-(diphosphooxymethyl)pyrimidine + ADP. It functions in the pathway cofactor biosynthesis; thiamine diphosphate biosynthesis; 4-amino-2-methyl-5-diphosphomethylpyrimidine from 5-amino-1-(5-phospho-D-ribosyl)imidazole: step 2/3. Its pathway is cofactor biosynthesis; thiamine diphosphate biosynthesis; 4-amino-2-methyl-5-diphosphomethylpyrimidine from 5-amino-1-(5-phospho-D-ribosyl)imidazole: step 3/3. In terms of biological role, catalyzes the phosphorylation of hydroxymethylpyrimidine phosphate (HMP-P) to HMP-PP, and also probably that of HMP to HMP-P. The sequence is that of Hydroxymethylpyrimidine/phosphomethylpyrimidine kinase THI21 (THI21) from Saccharomyces cerevisiae (strain ATCC 204508 / S288c) (Baker's yeast).